The primary structure comprises 582 residues: Inositol transporter 4 (582 aa).

Transmembrane regions (helical) follow at residues 35 to 55 (GIGG…LLFI), 70 to 90 (STIV…GGWI), 105 to 125 (VLFL…VIIV), 128 to 148 (IFVG…ISEA), 162 to 182 (GLLI…FVHT), 188 to 208 (WMLG…LSLP), 290 to 310 (FVGI…AGYA), 317 to 337 (ALSL…MMFV), 345 to 365 (LMII…TVFS), 456 to 476 (FGFL…PGMG), 494 to 514 (LGGG…SESF), and 525 to 545 (GTFL…WLLV).

The protein belongs to the major facilitator superfamily. Sugar transporter (TC 2.A.1.1) family. In terms of tissue distribution, highly expressed in pollen and phloem companion cells.

Its subcellular location is the cell membrane. Plasma membrane inositol-proton symporter. Mediates high-affinity myoinositol-proton symport across the plasma membrane. Active with myoinositol, scylloinositol and D-chiroinositol. Low activity with mucoinositol and alloinositol. In Arabidopsis thaliana (Mouse-ear cress), this protein is Inositol transporter 4 (INT4).